The sequence spans 874 residues: Alanine--tRNA ligase (874 aa).

Zn(2+)-binding residues include H564, H568, C665, and H669.

It belongs to the class-II aminoacyl-tRNA synthetase family. The cofactor is Zn(2+).

It is found in the cytoplasm. It catalyses the reaction tRNA(Ala) + L-alanine + ATP = L-alanyl-tRNA(Ala) + AMP + diphosphate. Functionally, catalyzes the attachment of alanine to tRNA(Ala) in a two-step reaction: alanine is first activated by ATP to form Ala-AMP and then transferred to the acceptor end of tRNA(Ala). Also edits incorrectly charged Ser-tRNA(Ala) and Gly-tRNA(Ala) via its editing domain. This is Alanine--tRNA ligase from Paraburkholderia phytofirmans (strain DSM 17436 / LMG 22146 / PsJN) (Burkholderia phytofirmans).